Reading from the N-terminus, the 647-residue chain is Chaperone protein DnaK (647 aa).

A Phosphothreonine; by autocatalysis modification is found at threonine 200. Positions alanine 611–glutamine 631 are enriched in low complexity. The segment at alanine 611 to lysine 647 is disordered. Residues alanine 638 to lysine 647 are compositionally biased toward basic and acidic residues.

This sequence belongs to the heat shock protein 70 family.

Its function is as follows. Acts as a chaperone. This chain is Chaperone protein DnaK, found in Cupriavidus taiwanensis (strain DSM 17343 / BCRC 17206 / CCUG 44338 / CIP 107171 / LMG 19424 / R1) (Ralstonia taiwanensis (strain LMG 19424)).